The chain runs to 362 residues: 5'-tyrosyl-DNA phosphodiesterase (362 aa).

The span at 1 to 10 shows a compositional bias: acidic residues; it reads MSNSDDEIQE. The interval 1–43 is disordered; sequence MSNSDDEIQEIEAKRQKMSQEDSEVEIEILDEPEQGKLKNSSM. The segment covering 11–20 has biased composition (basic and acidic residues); the sequence is IEAKRQKMSQ. Residues 21-33 are compositionally biased toward acidic residues; it reads EDSEVEIEILDEP. The interval 126–130 is interaction with 5' end of substrate DNA; the sequence is NIDGL. Mg(2+) is bound by residues D128 and E158. The interaction with 5' end of substrate DNA stretch occupies residues 232 to 237; sequence HLESTR. The active-site Proton donor/acceptor is the D271. The interaction with 5' end of substrate DNA stretch occupies residues 273–275; the sequence is NLR.

The protein belongs to the CCR4/nocturin family. TTRAP/TDP2 subfamily. As to quaternary structure, interacts with mxl-1; the interaction promotes axon regeneration after injury. Interacts with ets-4; the interaction is required for the sumoylation of ets-4. Mg(2+) is required as a cofactor. It depends on Mn(2+) as a cofactor.

The protein localises to the nucleus. It is found in the PML body. Its function is as follows. DNA repair enzyme that can remove a variety of covalent adducts from DNA through hydrolysis of a 5'-phosphodiester bond, giving rise to DNA with a free 5' phosphate. Catalyzes the hydrolysis of dead-end complexes between DNA and the topoisomerase 2 (top2) active site tyrosine residue. Hydrolyzes 5'-phosphoglycolates on protruding 5' ends on DNA double-strand breaks (DSBs) due to DNA damage by radiation and free radicals. Inhibits axon regeneration after neuronal injury by promoting the sumoylation of ets-4, thereby inhibiting the phosphorylation of ets-4 required for probable interaction with cebp-1 and activation of svh-2 expression. The polypeptide is 5'-tyrosyl-DNA phosphodiesterase (Caenorhabditis elegans).